We begin with the raw amino-acid sequence, 827 residues long: Tuftelin-interacting protein 11 (827 aa).

Disordered stretches follow at residues 31–129 (FNPH…KGFV) and 179–203 (QRKGKGAVGAYGSERTSQSLQDFPV). Basic and acidic residues predominate over residues 41 to 60 (TKEEATYGVWAERDSDEERP). Residues 88-98 (DVSDEDSDEDE) show a composition bias toward acidic residues. The span at 99-112 (KPVKQEEIPKEFVP) shows a compositional bias: basic and acidic residues. Positions 145-191 (TKGIGQKLLQKMGYVPGRGLGKNAQGIINPIEAKQRKGKGAVGAYGS) constitute a G-patch domain.

This sequence belongs to the TFP11/STIP family. As to quaternary structure, identified in the spliceosome C complex.

It is found in the nucleus. In terms of biological role, involved in pre-mRNA splicing, specifically in spliceosome disassembly during late-stage splicing events. The sequence is that of Tuftelin-interacting protein 11 (TFIP11) from Gallus gallus (Chicken).